Here is a 267-residue protein sequence, read N- to C-terminus: Shikimate dehydrogenase (NADP(+)) (267 aa).

Shikimate is bound by residues 14 to 16 (SLS) and threonine 61. Residue lysine 65 is the Proton acceptor of the active site. Shikimate contacts are provided by asparagine 86 and aspartate 101. NADP(+)-binding positions include 126–130 (GAGGA), 150–155 (NRTHSK), and leucine 213. Position 215 (tyrosine 215) interacts with shikimate. Glycine 236 lines the NADP(+) pocket.

Belongs to the shikimate dehydrogenase family. As to quaternary structure, homodimer.

It carries out the reaction shikimate + NADP(+) = 3-dehydroshikimate + NADPH + H(+). It participates in metabolic intermediate biosynthesis; chorismate biosynthesis; chorismate from D-erythrose 4-phosphate and phosphoenolpyruvate: step 4/7. Functionally, involved in the biosynthesis of the chorismate, which leads to the biosynthesis of aromatic amino acids. Catalyzes the reversible NADPH linked reduction of 3-dehydroshikimate (DHSA) to yield shikimate (SA). The sequence is that of Shikimate dehydrogenase (NADP(+)) from Vesicomyosocius okutanii subsp. Calyptogena okutanii (strain HA).